We begin with the raw amino-acid sequence, 158 residues long: Anaerobic ribonucleoside-triphosphate reductase-activating protein (158 aa).

[4Fe-4S] cluster contacts are provided by Cys26, Cys30, and Cys33. S-adenosyl-L-methionine contacts are provided by residues 32–34 (GCY) and Gly74.

Belongs to the organic radical-activating enzymes family. As to quaternary structure, forms a tetramer composed of two NrdD and two NrdG subunits. [4Fe-4S] cluster serves as cofactor.

It is found in the cytoplasm. The enzyme catalyses glycyl-[protein] + reduced [flavodoxin] + S-adenosyl-L-methionine = glycin-2-yl radical-[protein] + semiquinone [flavodoxin] + 5'-deoxyadenosine + L-methionine + H(+). In terms of biological role, activation of anaerobic ribonucleoside-triphosphate reductase under anaerobic conditions by generation of an organic free radical, using S-adenosylmethionine and reduced flavodoxin as cosubstrates to produce 5'-deoxy-adenosine. The chain is Anaerobic ribonucleoside-triphosphate reductase-activating protein (nrdG) from Pasteurella multocida (strain Pm70).